The sequence spans 178 residues: Endothelin-2 (178 aa).

An N-terminal signal peptide occupies residues 1-26; the sequence is MVAMPTAWCSIALALLLALHEGKGQV. Residues 27 to 46 constitute a propeptide that is removed on maturation; that stretch reads AAAPDQPAPSHRARASHLRP. Disulfide bonds link Cys49–Cys63 and Cys51–Cys59. A propeptide spanning residues 70-178 is cleaved from the precursor; that stretch reads VNTPGQTAPY…RPTHSRRWKR (109 aa). Positions 96-111 are endothelin-like; sequence CECSSGRDPACATFCH.

This sequence belongs to the endothelin/sarafotoxin family.

The protein resides in the secreted. Its function is as follows. Endothelins are endothelium-derived vasoconstrictor peptides. The protein is Endothelin-2 (EDN2) of Felis catus (Cat).